The following is a 407-amino-acid chain: Phosphonoacetate hydrolase (407 aa).

Zn(2+)-binding residues include aspartate 25, threonine 64, aspartate 202, histidine 206, aspartate 241, histidine 242, and histidine 368. Residues threonine 64 and aspartate 202 each coordinate substrate. Substrate is bound by residues histidine 242 and histidine 368.

This sequence belongs to the alkaline phosphatase family. PhnA subfamily. As to quaternary structure, homodimer. Zn(2+) is required as a cofactor.

It catalyses the reaction phosphonoacetate + H2O = acetate + phosphate + H(+). Functionally, specifically hydrolyzes phosphonoacetate. Does not have activity on other organophosphonates or acetates. The protein is Phosphonoacetate hydrolase of Pseudomonas cedrina.